We begin with the raw amino-acid sequence, 172 residues long: Translation initiation factor IF-3 (172 aa).

This sequence belongs to the IF-3 family. Monomer.

The protein localises to the cytoplasm. IF-3 binds to the 30S ribosomal subunit and shifts the equilibrium between 70S ribosomes and their 50S and 30S subunits in favor of the free subunits, thus enhancing the availability of 30S subunits on which protein synthesis initiation begins. In Oceanobacillus iheyensis (strain DSM 14371 / CIP 107618 / JCM 11309 / KCTC 3954 / HTE831), this protein is Translation initiation factor IF-3.